Consider the following 152-residue polypeptide: Ferredoxin-thioredoxin reductase catalytic chain, chloroplastic (152 aa).

A chloroplast-targeting transit peptide spans 1-38 (MTSTVTTTVGCGGLPVRPLSTATRGRPRRCAVRAQAAG). Cysteine 91 serves as a coordination point for [4Fe-4S] cluster. Cysteine 93 acts as the Nucleophile in catalysis. Cysteine 93 and cysteine 123 are oxidised to a cystine. The [4Fe-4S] cluster site is built by cysteine 110, cysteine 112, and cysteine 121.

Belongs to the ferredoxin thioredoxin reductase beta subunit family. Heterodimer of subunit A (variable subunit) and subunit B (catalytic subunit). Heterodimeric FTR forms a complex with ferredoxin and thioredoxin. [4Fe-4S] cluster serves as cofactor.

It is found in the plastid. It localises to the chloroplast. It carries out the reaction [thioredoxin]-disulfide + 2 reduced [2Fe-2S]-[ferredoxin] + 2 H(+) = [thioredoxin]-dithiol + 2 oxidized [2Fe-2S]-[ferredoxin]. Catalytic subunit of the ferredoxin-thioredoxin reductase (FTR), which catalyzes the two-electron reduction of thioredoxins by the electrons provided by reduced ferredoxin. The sequence is that of Ferredoxin-thioredoxin reductase catalytic chain, chloroplastic (FTRC) from Zea mays (Maize).